The primary structure comprises 327 residues: Mitochondrial coenzyme A transporter SLC25A42 (327 aa).

3 Solcar repeats span residues 34–120 (KSVL…YKKL), 132–217 (LTPI…LKKL), and 227–315 (PYTF…TQIL). Helical transmembrane passes span 36-56 (VLNSLTSGALAGAVAKTAVAP), 92-112 (LWRGNSATMVRVIPYAAIQFC), 138-158 (LLAGALAGTTATLLTYPLDLV), 192-209 (GFTPTVLGVIPYAGISFF), 233-253 (LLFGACAGLFGQSSSYPLDVV), and 296-316 (VKGPVAVGISFTTFDLTQILL).

It belongs to the mitochondrial carrier (TC 2.A.29) family.

The protein localises to the mitochondrion inner membrane. It catalyses the reaction ADP(out) + CoA(in) = ADP(in) + CoA(out). It carries out the reaction 3'-dephospho-CoA(in) + ADP(out) = 3'-dephospho-CoA(out) + ADP(in). The catalysed reaction is adenosine 3',5'-bisphosphate(in) + ADP(out) = adenosine 3',5'-bisphosphate(out) + ADP(in). The enzyme catalyses AMP(in) + ADP(out) = AMP(out) + ADP(in). It catalyses the reaction dADP(in) + ADP(out) = dADP(out) + ADP(in). It carries out the reaction ADP(in) + ATP(out) = ADP(out) + ATP(in). Its function is as follows. Mitochondrial carrier mediating the transport of coenzyme A (CoA) in mitochondria in exchange for intramitochondrial (deoxy)adenine nucleotides and adenosine 3',5'-diphosphate. This Xenopus laevis (African clawed frog) protein is Mitochondrial coenzyme A transporter SLC25A42 (slc25a42).